Consider the following 711-residue polypeptide: Protein Smaug homolog 1 (711 aa).

Ser-168 is subject to Phosphoserine. Positions 278 to 323 (ARGPQCLPSDHAPLSPQSSVASSGSGGSEHLEDQTTARNTFQEEGS) are disordered. Residues 323-396 (SGMKDVPAWL…LKSLERDIIE (74 aa)) enclose the SAM domain. Residue Ser-420 is modified to Phosphoserine. Disordered stretches follow at residues 422–448 (STTPEVRCREPSLMESPSPDCKDSAAA) and 565–588 (NRGFGQSNSLPTASSVGSGMGRRN). The residue at position 424 (Thr-424) is a Phosphothreonine. Arg-566 bears the Omega-N-methylarginine mark. Positions 568–581 (FGQSNSLPTASSVG) are enriched in polar residues. Ser-573 carries the phosphoserine modification.

It belongs to the SMAUG family. Expressed in brain (at protein level).

The protein resides in the cytoplasm. Its subcellular location is the cell projection. It is found in the dendrite. The protein localises to the synapse. It localises to the synaptosome. Its function is as follows. Acts as a translational repressor of SRE-containing messengers. The sequence is that of Protein Smaug homolog 1 (Samd4a) from Mus musculus (Mouse).